Here is a 171-residue protein sequence, read N- to C-terminus: Small ribosomal subunit protein uS5 (171 aa).

Residues 15 to 78 (LKDRLVAINR…EAAKKNLTRV (64 aa)) enclose the S5 DRBM domain.

It belongs to the universal ribosomal protein uS5 family. As to quaternary structure, part of the 30S ribosomal subunit. Contacts proteins S4 and S8.

With S4 and S12 plays an important role in translational accuracy. In terms of biological role, located at the back of the 30S subunit body where it stabilizes the conformation of the head with respect to the body. This chain is Small ribosomal subunit protein uS5, found in Phocaeicola vulgatus (strain ATCC 8482 / DSM 1447 / JCM 5826 / CCUG 4940 / NBRC 14291 / NCTC 11154) (Bacteroides vulgatus).